The sequence spans 512 residues: MAAPMDCLESLEGDGDAGRRASGVEVALPSNPTAPAPLCPHGPTLLFVKVNQGKEETRKFYACSACRDRKDCNFFQWEDEKLSEARLAAREIHNQKCQPPLSRAQCIERYLSFIQLPLAQRKFCQSCQQLLLPADWREHGTHQLSADISVAQLGRPSQLLYPLENKKTHAQYLFADRSCQFLAGLLATLGFSRVLCVGAPRLHEQIRLTASGERSGMRSLLLDIDFRYSQFYLEGSFCRYNMFNHHFFDGKAALEVCKEFLQEEEGKGVIMVTDPPFGGLVEPLAITFKKLIAMWKEGQSQDDSHKELPIFWIFPYFFESRICQFFPSFCMLDYQVDYDNHALYKHGKTGRKQSPVRIFTNVPPNKIILPSEEGYRFCSLCQRYVSRENQHCVHCNSCTSKDGRKWSHCFLCKKCVKPSWIHCNTCNRCALPDHSCLGPKDGCFICGALDHKRSNCPNIGTSWRANKLVEFFGFLEKRLLMSSFLGAIYRSTKLSEDSEFFRVLNRSSHHYV.

Cys-39, His-41, Cys-63, Cys-72, Cys-124, Cys-127, His-139, and His-142 together coordinate Zn(2+). The GRF-type zinc-finger motif lies at 39 to 81; sequence CPHGPTLLFVKVNQGKEETRKFYACSACRDRKDCNFFQWEDEK. S-adenosyl-L-methionine-binding positions include 171-174, Arg-201, Asp-223, 241-242, and Asp-274; these read QYLF and NM. Positions 335–355 are regulatory loop; it reads QVDYDNHALYKHGKTGRKQSP. The Zn(2+) site is built by Cys-378, Cys-381, His-391, Cys-392, Cys-395, Cys-398, His-408, Cys-409, Cys-412, Cys-415, His-422, Cys-423, Cys-426, Cys-429, His-434, and Cys-436. A DHHC domain is found at 393–445; that stretch reads VHCNSCTSKDGRKWSHCFLCKKCVKPSWIHCNTCNRCALPDHSCLGPKDGCFI. The CCHC-type zinc finger occupies 441–458; it reads DGCFICGALDHKRSNCPN.

The protein belongs to the ZCCHC4 family. As to quaternary structure, interacts with components of the ASC-1 complex TRIP4, ASCC1, ASCC2 and ASCC3. Interact with AHCYL1 and AHCYL2. Interact with YTHDC2.

The protein localises to the cytoplasm. It localises to the nucleus. Its subcellular location is the nucleolus. It catalyses the reaction adenosine(4220) in 28S rRNA + S-adenosyl-L-methionine = N(6)-methyladenosine(4220) in 28S rRNA + S-adenosyl-L-homocysteine + H(+). Functionally, rRNA N6-methyltransferase that specifically methylates the adenine in position 4220 of 28S rRNA. N6-methylation of adenine(4220) in 28S rRNA is required for translation. The sequence is that of rRNA N(6)-adenosine-methyltransferase ZCCHC4 from Mus musculus (Mouse).